The sequence spans 345 residues: S-adenosylmethionine:tRNA ribosyltransferase-isomerase (345 aa).

The protein belongs to the QueA family. In terms of assembly, monomer.

Its subcellular location is the cytoplasm. It catalyses the reaction 7-aminomethyl-7-carbaguanosine(34) in tRNA + S-adenosyl-L-methionine = epoxyqueuosine(34) in tRNA + adenine + L-methionine + 2 H(+). It functions in the pathway tRNA modification; tRNA-queuosine biosynthesis. In terms of biological role, transfers and isomerizes the ribose moiety from AdoMet to the 7-aminomethyl group of 7-deazaguanine (preQ1-tRNA) to give epoxyqueuosine (oQ-tRNA). The polypeptide is S-adenosylmethionine:tRNA ribosyltransferase-isomerase (Alkalilimnicola ehrlichii (strain ATCC BAA-1101 / DSM 17681 / MLHE-1)).